Reading from the N-terminus, the 367-residue chain is F-box protein At3g56470 (367 aa).

The segment covering 1–18 (MVTRRRSKKKKKTKRKKQ) has biased composition (basic residues). The interval 1-24 (MVTRRRSKKKKKTKRKKQSSKEKE) is disordered. The F-box domain maps to 26-81 (YQTFINLPCDLLQLVISRLPLKDNIRASAVCKTWHEACVSLRVIHTSPWLIYFSKT).

This Arabidopsis thaliana (Mouse-ear cress) protein is F-box protein At3g56470.